A 595-amino-acid polypeptide reads, in one-letter code: DNA mismatch repair protein MutL (595 aa).

It belongs to the DNA mismatch repair MutL/HexB family.

This protein is involved in the repair of mismatches in DNA. It is required for dam-dependent methyl-directed DNA mismatch repair. May act as a 'molecular matchmaker', a protein that promotes the formation of a stable complex between two or more DNA-binding proteins in an ATP-dependent manner without itself being part of a final effector complex. The sequence is that of DNA mismatch repair protein MutL from Rhodopseudomonas palustris (strain TIE-1).